The primary structure comprises 659 residues: MDSTNLNKRPLLQYSLSSLGSQITKWSSSRPTSPVRKARSTENDFLSKQDTSSILPSINDDGGEQWYEKFKPNCLEQVAIHKRKLKDVQEALDAMFLPNAKHRILLLSGPSGCSKSTVIKELSKILVPKYRQNSNGTSFRSTPNEHKVTEFRGDCIVNDLPQMESFSEFLKGARYLVMSNLSLILIEDLPNVFHIDTRRRFQQLILQWLYSSEPLLPPLVICITECEIPENDNNYRKFGIDYTFSAETIMNKEILMHPRLKRIKFNPINSTLLKKHLKFICVQNMKMLKEKNKWNKRQEVIDYIAQETGDIRSAITTLQFWATSSGSLPISTRESTISYFHAIGKVIHGSHSTNNDNEMINNLFENSNNLLSKEDFKLGILENYNTFNKGEFSISDASSIVDCLSECDNMNGLPESNEYGLREVRKTFRNISKQGHNHGTVYFPREWKVRKLQNSFKVQAEDWLNVSLYKYNAVHSFRNITLEFGYYAPLIRKCQSYKKKYILYYLKNLPSGSSGPKQTMDKFSDIMKVENGIDVVDRIGGPIEALSVEDGLAPLMDNDSNNCDHLEDQKKERDRRLRMLIDQYERNVMMANDDLEDEETSFNDDPIVDSDSDNSNNIGNETFGRSDEDESLCEILSQRQPRKAPVISESLSDSDLEIL.

A disordered region spans residues 24–54 (TKWSSSRPTSPVRKARSTENDFLSKQDTSSI). 109-116 (GPSGCSKS) is a binding site for ATP. The segment covering 596-612 (EDEETSFNDDPIVDSDS) has biased composition (acidic residues). A disordered region spans residues 596-659 (EDEETSFNDD…SLSDSDLEIL (64 aa)). Phosphoserine is present on residues Ser652 and Ser654.

Belongs to the rad17/RAD24 family. As to quaternary structure, component of the RAD24-RFC complex which consists of RAD14, RFC2, RFC3, RFC4 and RFC5 and associates with the checkpoint clamp DDC1:MEC3:RAD17 complex. RAD24 interacts with ECO1.

The protein resides in the nucleus. In terms of biological role, participates in checkpoint pathways arrest of the cell cycle, a mechanism that allows the DNA repair pathways to act to restore the integrity of the DNA prior to DNA synthesis or separation of the replicated chromosomes. Regulates the DNA damage checkpoint pathway throughout the cell cycle, when associated with RCF5. Component of the RFC-like RAD24-RFC complex which loads the checkpoint clamp DDC1:MEC3:RAD17 complex and is involved in DNA repair pathways. During a clamp loading circle, the RFC:clamp complex binds to DNA and the recognition of the double-stranded/single-stranded junction stimulates ATP hydrolysis by RFC. The complex presumably provides bipartite ATP sites in which one subunit supplies a catalytic site for hydrolysis of ATP bound to the neighboring subunit. Dissociation of RFC from the clamp leaves the clamp encircling DNA. The protein is Checkpoint protein RAD24 (RAD24) of Saccharomyces cerevisiae (strain ATCC 204508 / S288c) (Baker's yeast).